We begin with the raw amino-acid sequence, 147 residues long: UPF0178 protein AFE_3267 (147 aa).

The protein belongs to the UPF0178 family.

The sequence is that of UPF0178 protein AFE_3267 from Acidithiobacillus ferrooxidans (strain ATCC 23270 / DSM 14882 / CIP 104768 / NCIMB 8455) (Ferrobacillus ferrooxidans (strain ATCC 23270)).